The primary structure comprises 292 residues: MSKKLLYAAQMTAFDKDGNINLDGIRALVRYNIDVNKVDGLYVCGSTGEAFMLNTDEKKQVMETVYDEANGAIDLVAQVGSLNLKEAKELAKFATDLGYPKLSAVTPFYYNFTFEQIKDYYNEILKDVDNKLLIYSIPALTGVALTTDQFAELFENPKIIGIKYTNADFYLLERVRNAFPDKLILSGFDEMLLPALALNVDGCIGSTYNLNAPRVREEMDAFEAGDIDKARQLQNISNDMITDLIANDIYPTLKLVMKHMGVDAGYVKKPMSHPTPEMEAGATAIYEKYFKN.

2 residues coordinate aceneuramate: S46 and T47. Y135 (proton donor) is an active-site residue. The active-site Schiff-base intermediate with substrate is K163. 5 residues coordinate aceneuramate: T165, G187, D189, E190, and S206.

Belongs to the DapA family. NanA subfamily. In terms of assembly, homotetramer.

The protein resides in the cytoplasm. It carries out the reaction aceneuramate = aldehydo-N-acetyl-D-mannosamine + pyruvate. It functions in the pathway amino-sugar metabolism; N-acetylneuraminate degradation; D-fructose 6-phosphate from N-acetylneuraminate: step 1/5. Functionally, catalyzes the reversible aldol cleavage of N-acetylneuraminic acid (sialic acid; Neu5Ac) to form pyruvate and N-acetylmannosamine (ManNAc) via a Schiff base intermediate. This is N-acetylneuraminate lyase from Lactiplantibacillus plantarum (strain ATCC BAA-793 / NCIMB 8826 / WCFS1) (Lactobacillus plantarum).